A 590-amino-acid polypeptide reads, in one-letter code: PWWP domain-containing protein 2B (590 aa).

4 disordered regions span residues 52–110 (APLP…PPLP), 182–347 (KSTL…EHEP), 360–398 (YLRD…PQGP), and 426–467 (DSLD…TVPP). Ser-84 carries the post-translational modification Phosphoserine. The segment covering 99–110 (PEPPPPLVPPLP) has biased composition (pro residues). Phosphoserine occurs at positions 186 and 206. Positions 208–217 (PDRELRKPEE) are enriched in basic and acidic residues. Ser-250 is subject to Phosphoserine. The segment covering 296 to 305 (VLDRESRDRP) has biased composition (basic and acidic residues). The segment covering 376 to 385 (GLADLSSGSS) has biased composition (low complexity). Ser-447 bears the Phosphoserine mark. Residues 490–550 (VGDIVWGKIH…ISKLSPFSEF (61 aa)) form the PWWP domain.

Component of a MTA1-specific subcomplex of the NuRD complex composed of PWWP2B, MTA1 and HDAC1 but does not contain CHD4 and MBD3. Interacts with MTA1 and HDAC1. Interacts with MTA2, MTA3, HDAC2, RBBP4, RBBP7, BRCC3 and ZNF516. Does not interact with CHD4 and MBD3. Post-translationally, deubiquitinated by BRCC3; leading to its stabilization.

Functionally, chromatin-binding protein that acts as an adapter between distinct nucleosome components (H3K36me3 or H2A.Z) and chromatin-modifying complexes, contributing to the regulation of the levels of histone acetylation at actively transcribed genes. Competes with CHD4 and MBD3 for interaction with MTA1 to form a NuRD subcomplex, preventing the formation of full NuRD complex (containing CHD4 and MBD3), leading to recruitment of HDACs to gene promoters resulting in turn in the deacetylation of nearby H3K27 and H2A.Z. Plays a role in facilitating transcriptional elongation through regulation of histone acetylation. Negatively regulates brown adipocyte thermogenesis by interacting with and stabilizing HDAC1 at the UCP1 gene promoter, thereby promoting histone deacetylation at the promoter leading to the repression of UCP1 expression. This is PWWP domain-containing protein 2B (PWWP2B) from Homo sapiens (Human).